We begin with the raw amino-acid sequence, 1072 residues long: DNA-directed RNA polymerase subunit beta (1072 aa).

The protein belongs to the RNA polymerase beta chain family. In plastids the minimal PEP RNA polymerase catalytic core is composed of four subunits: alpha, beta, beta', and beta''. When a (nuclear-encoded) sigma factor is associated with the core the holoenzyme is formed, which can initiate transcription.

The protein resides in the plastid. It is found in the chloroplast. The enzyme catalyses RNA(n) + a ribonucleoside 5'-triphosphate = RNA(n+1) + diphosphate. Functionally, DNA-dependent RNA polymerase catalyzes the transcription of DNA into RNA using the four ribonucleoside triphosphates as substrates. This chain is DNA-directed RNA polymerase subunit beta, found in Arabidopsis thaliana (Mouse-ear cress).